The sequence spans 1292 residues: Kinesin-like protein KIN-12A (1292 aa).

Residues 1-86 (MKKHFTLPRN…LSAETATESG (86 aa)) are disordered. The segment covering 19–29 (PHSPNPSISKS) has biased composition (low complexity). A compositionally biased stretch (pro residues) spans 62–71 (PLPPRPPPSN). The 336-residue stretch at 91–426 (GVKVIVRMKP…LRFAQRAKAI (336 aa)) folds into the Kinesin motor domain. Residue 165 to 172 (GQTGSGKT) participates in ATP binding. Microtubules-binding regions lie at residues 293-297 (SSRSH), 326-332 (VDLAGSE), and 375-379 (HIPYR). The tract at residues 424–461 (KAIQNKAVVNEVMQDDVNFLRGVIHQLRDELQRMKNDG) is neck. The disordered stretch occupies residues 677-724 (SVSPTIRNSRKSLKTSELSTASQKDSEGENLVTEAADPSPATSKKMNN). Coiled coils occupy residues 945-992 (EVLK…CYID) and 1047-1232 (SEEL…NQLV).

It belongs to the TRAFAC class myosin-kinesin ATPase superfamily. Kinesin family. KIN-12 subfamily. Homodimer and heterodimer with KIN12B. Interacts with TIO.

Its subcellular location is the cytoplasm. The protein localises to the cytoskeleton. It is found in the phragmoplast. Plus-end directed kinesin-like motor enzyme that plays a critical role in the organization of phragmoplast microtubules during cytokinesis. Constitutes a signaling module in association with serine/threonine-protein kinase TIO that is required to support phragmoplast expansion and cell-plate growth in plant cells. Binds microtubules in an ATP-sensitive manner. The sequence is that of Kinesin-like protein KIN-12A from Arabidopsis thaliana (Mouse-ear cress).